Reading from the N-terminus, the 358-residue chain is MFDKLEDLLIRFQEIQNELNEPTVTNDQARFRKLMKEQNDLGEIVDKYLEYKQTKKNIEESLELLDEESDEEMRELAKEELSTSKANLVVIEEQLKILLLPKDPNDSKNVIVEIRGGAGGDEAALFAAELFRMYSKYAETMRWKIDMMNLNENGIGGFKEVIFMINGQGAYSKLKYESGVHRVQRIPVTESGGRIHTSTVTVAIMPEAEEVDVELNMNDCRFDVFRSSGNGGQCVNTTDSAVRLTHMPTGIVISCQDEKSQLKNRDKALKVLRARLYELELEKAHDAEAAARKSQVGTGDRSEKIRTYNFPQGRCTDHRIKLTSHRLDDIMNGDLQEVIDSLTAADQAAKLSNMQDEY.

Glutamine 233 carries the N5-methylglutamine modification.

Belongs to the prokaryotic/mitochondrial release factor family. Post-translationally, methylated by PrmC. Methylation increases the termination efficiency of RF1.

The protein resides in the cytoplasm. Functionally, peptide chain release factor 1 directs the termination of translation in response to the peptide chain termination codons UAG and UAA. The protein is Peptide chain release factor 1 of Lachnoclostridium phytofermentans (strain ATCC 700394 / DSM 18823 / ISDg) (Clostridium phytofermentans).